Consider the following 364-residue polypeptide: Protein leg1b (364 aa).

A signal peptide spans 1–22 (MSEMGFLRSVAAVLLLAVFSHA). An N-linked (GlcNAc...) asparagine glycan is attached at Asn-70.

Belongs to the LEG1 family. In terms of tissue distribution, detected in all tissues tested, with the highest levels in serum (at protein level). At mRNA level, only expressed in liver.

The protein resides in the secreted. In terms of biological role, involved in early development of liver, exocrine pancreas and intestine, probably through cell cycle regulation. In liver, its function is partially redundant with leg1a function. This chain is Protein leg1b, found in Danio rerio (Zebrafish).